A 98-amino-acid chain; its full sequence is Large ribosomal subunit protein uL23 (98 aa).

This sequence belongs to the universal ribosomal protein uL23 family. Part of the 50S ribosomal subunit. Contacts protein L29, and trigger factor when it is bound to the ribosome.

One of the early assembly proteins it binds 23S rRNA. One of the proteins that surrounds the polypeptide exit tunnel on the outside of the ribosome. Forms the main docking site for trigger factor binding to the ribosome. The sequence is that of Large ribosomal subunit protein uL23 from Ruegeria sp. (strain TM1040) (Silicibacter sp.).